Here is an 82-residue protein sequence, read N- to C-terminus: ATP synthase subunit c (82 aa).

2 consecutive transmembrane segments (helical) span residues 7 to 27 (AASV…PGIG) and 57 to 77 (LAFM…LLFA).

It belongs to the ATPase C chain family. As to quaternary structure, F-type ATPases have 2 components, F(1) - the catalytic core - and F(0) - the membrane proton channel. F(1) has five subunits: alpha(3), beta(3), gamma(1), delta(1), epsilon(1). F(0) has four main subunits: a(1), b(1), b'(1) and c(10-14). The alpha and beta chains form an alternating ring which encloses part of the gamma chain. F(1) is attached to F(0) by a central stalk formed by the gamma and epsilon chains, while a peripheral stalk is formed by the delta, b and b' chains.

The protein resides in the cellular thylakoid membrane. F(1)F(0) ATP synthase produces ATP from ADP in the presence of a proton or sodium gradient. F-type ATPases consist of two structural domains, F(1) containing the extramembraneous catalytic core and F(0) containing the membrane proton channel, linked together by a central stalk and a peripheral stalk. During catalysis, ATP synthesis in the catalytic domain of F(1) is coupled via a rotary mechanism of the central stalk subunits to proton translocation. In terms of biological role, key component of the F(0) channel; it plays a direct role in translocation across the membrane. A homomeric c-ring of between 10-14 subunits forms the central stalk rotor element with the F(1) delta and epsilon subunits. The protein is ATP synthase subunit c of Synechococcus sp. (strain RCC307).